Consider the following 372-residue polypeptide: MISVMAPGSEKTGKVETILKKRVLLAISGGVDSSVAALLLKEEGYEVAGVTMCLGVREEENKVRCCGREAIEDARGVCEILGIPHYVLDYAPLLETCVIDKFVREYRLGRTPNPCIDCNRYLKFGHLLDSARTMGFDYLATGHYAKIERKESRWILKKAKDLVKDQTYFLYPIPVAALEHILFPLADRTKDEVREIARQALLPIAEKPESQDLCFVTQDSYRDFLQEQGCPVHPGPIVDRSGRVLGEHSGTVFYTIGQRHGLGISSPFPLYVVAIDVAGNSVIVSGKEDVYAQGLVAGEMNWLTPERPQEAEARIRHRKRTCSCRIVPEGDRIRVYFAEDQDAVTPGQAVVLYQEDEVLGGGVIEEALHYAN.

Residues 26–33 (AISGGVDS) and Met52 contribute to the ATP site. Catalysis depends on Cys118, which acts as the Nucleophile. Cys118 and Cys214 form a disulfide bridge. Residue Gly142 participates in ATP binding. Residues 164–166 (KDQ) are interaction with tRNA. Catalysis depends on Cys214, which acts as the Cysteine persulfide intermediate.

Belongs to the MnmA/TRMU family.

The protein localises to the cytoplasm. It catalyses the reaction S-sulfanyl-L-cysteinyl-[protein] + uridine(34) in tRNA + AH2 + ATP = 2-thiouridine(34) in tRNA + L-cysteinyl-[protein] + A + AMP + diphosphate + H(+). Functionally, catalyzes the 2-thiolation of uridine at the wobble position (U34) of tRNA, leading to the formation of s(2)U34. This Syntrophus aciditrophicus (strain SB) protein is tRNA-specific 2-thiouridylase MnmA 1.